The following is a 276-amino-acid chain: Hydroxyethylthiazole kinase (276 aa).

M48 lines the substrate pocket. Residues R124 and T175 each coordinate ATP. G202 serves as a coordination point for substrate.

Belongs to the Thz kinase family. It depends on Mg(2+) as a cofactor.

The enzyme catalyses 5-(2-hydroxyethyl)-4-methylthiazole + ATP = 4-methyl-5-(2-phosphooxyethyl)-thiazole + ADP + H(+). It functions in the pathway cofactor biosynthesis; thiamine diphosphate biosynthesis; 4-methyl-5-(2-phosphoethyl)-thiazole from 5-(2-hydroxyethyl)-4-methylthiazole: step 1/1. Its function is as follows. Catalyzes the phosphorylation of the hydroxyl group of 4-methyl-5-beta-hydroxyethylthiazole (THZ). The polypeptide is Hydroxyethylthiazole kinase (Clostridium beijerinckii (strain ATCC 51743 / NCIMB 8052) (Clostridium acetobutylicum)).